We begin with the raw amino-acid sequence, 370 residues long: 4-hydroxy-3-methylbut-2-en-1-yl diphosphate synthase (flavodoxin) (370 aa).

[4Fe-4S] cluster-binding residues include cysteine 270, cysteine 273, cysteine 305, and glutamate 312.

Belongs to the IspG family. [4Fe-4S] cluster serves as cofactor.

The enzyme catalyses (2E)-4-hydroxy-3-methylbut-2-enyl diphosphate + oxidized [flavodoxin] + H2O + 2 H(+) = 2-C-methyl-D-erythritol 2,4-cyclic diphosphate + reduced [flavodoxin]. The protein operates within isoprenoid biosynthesis; isopentenyl diphosphate biosynthesis via DXP pathway; isopentenyl diphosphate from 1-deoxy-D-xylulose 5-phosphate: step 5/6. Converts 2C-methyl-D-erythritol 2,4-cyclodiphosphate (ME-2,4cPP) into 1-hydroxy-2-methyl-2-(E)-butenyl 4-diphosphate. The sequence is that of 4-hydroxy-3-methylbut-2-en-1-yl diphosphate synthase (flavodoxin) from Saccharophagus degradans (strain 2-40 / ATCC 43961 / DSM 17024).